The primary structure comprises 62 residues: Large ribosomal subunit protein bL33 (62 aa).

The protein belongs to the bacterial ribosomal protein bL33 family.

The sequence is that of Large ribosomal subunit protein bL33 from Bacteroides fragilis (strain ATCC 25285 / DSM 2151 / CCUG 4856 / JCM 11019 / LMG 10263 / NCTC 9343 / Onslow / VPI 2553 / EN-2).